The chain runs to 334 residues: Phosphoribosylformylglycinamidine cyclo-ligase (334 aa).

It belongs to the AIR synthase family.

The protein resides in the cytoplasm. The catalysed reaction is 2-formamido-N(1)-(5-O-phospho-beta-D-ribosyl)acetamidine + ATP = 5-amino-1-(5-phospho-beta-D-ribosyl)imidazole + ADP + phosphate + H(+). It functions in the pathway purine metabolism; IMP biosynthesis via de novo pathway; 5-amino-1-(5-phospho-D-ribosyl)imidazole from N(2)-formyl-N(1)-(5-phospho-D-ribosyl)glycinamide: step 2/2. This Pyrococcus abyssi (strain GE5 / Orsay) protein is Phosphoribosylformylglycinamidine cyclo-ligase.